The following is a 185-amino-acid chain: Crossover junction endodeoxyribonuclease RuvC (185 aa).

Catalysis depends on residues Asp-7, Glu-68, and Asp-141. Positions 7, 68, and 141 each coordinate Mg(2+).

The protein belongs to the RuvC family. As to quaternary structure, homodimer which binds Holliday junction (HJ) DNA. The HJ becomes 2-fold symmetrical on binding to RuvC with unstacked arms; it has a different conformation from HJ DNA in complex with RuvA. In the full resolvosome a probable DNA-RuvA(4)-RuvB(12)-RuvC(2) complex forms which resolves the HJ. It depends on Mg(2+) as a cofactor.

The protein localises to the cytoplasm. The catalysed reaction is Endonucleolytic cleavage at a junction such as a reciprocal single-stranded crossover between two homologous DNA duplexes (Holliday junction).. Functionally, the RuvA-RuvB-RuvC complex processes Holliday junction (HJ) DNA during genetic recombination and DNA repair. Endonuclease that resolves HJ intermediates. Cleaves cruciform DNA by making single-stranded nicks across the HJ at symmetrical positions within the homologous arms, yielding a 5'-phosphate and a 3'-hydroxyl group; requires a central core of homology in the junction. The consensus cleavage sequence is 5'-(A/T)TT(C/G)-3'. Cleavage occurs on the 3'-side of the TT dinucleotide at the point of strand exchange. HJ branch migration catalyzed by RuvA-RuvB allows RuvC to scan DNA until it finds its consensus sequence, where it cleaves and resolves the cruciform DNA. The sequence is that of Crossover junction endodeoxyribonuclease RuvC from Mycolicibacterium smegmatis (strain ATCC 700084 / mc(2)155) (Mycobacterium smegmatis).